Reading from the N-terminus, the 122-residue chain is Large ribosomal subunit protein uL14 (122 aa).

Belongs to the universal ribosomal protein uL14 family. As to quaternary structure, part of the 50S ribosomal subunit. Forms a cluster with proteins L3 and L19. In the 70S ribosome, L14 and L19 interact and together make contacts with the 16S rRNA in bridges B5 and B8.

Binds to 23S rRNA. Forms part of two intersubunit bridges in the 70S ribosome. The chain is Large ribosomal subunit protein uL14 from Erythrobacter litoralis (strain HTCC2594).